The sequence spans 99 residues: uncharacterized protein (99 aa).

This is an uncharacterized protein from Salmonella typhimurium (strain LT2 / SGSC1412 / ATCC 700720).